The sequence spans 172 residues: Adenine phosphoribosyltransferase (172 aa).

It belongs to the purine/pyrimidine phosphoribosyltransferase family. As to quaternary structure, homodimer.

It is found in the cytoplasm. The catalysed reaction is AMP + diphosphate = 5-phospho-alpha-D-ribose 1-diphosphate + adenine. The protein operates within purine metabolism; AMP biosynthesis via salvage pathway; AMP from adenine: step 1/1. Its function is as follows. Catalyzes a salvage reaction resulting in the formation of AMP, that is energically less costly than de novo synthesis. The polypeptide is Adenine phosphoribosyltransferase (Prochlorococcus marinus (strain NATL2A)).